The chain runs to 213 residues: Transcriptional regulatory protein CrdR (213 aa).

The Response regulatory domain maps to 4 to 119 (KIFLLEDDYL…ELEARIKRFF (116 aa)). Residue aspartate 53 is modified to 4-aspartylphosphate. A DNA-binding region (ompR/PhoB-type) is located at residues 121–212 (DDPIEIMPNI…HKGVGYRFNP (92 aa)).

Post-translationally, phosphorylated by CrdS.

Its function is as follows. Member of the two-component regulatory system CrdR/CrdS that induces the transcriptional induction of the copper resistance determinant CrdA. Upon phosphorylation by CrdS, functions as a transcriptional regulator by direct binding to promoter regions of target genes including the crdA promoter or nitric oxide-responsive gene promoters. This Helicobacter pylori (strain ATCC 700392 / 26695) (Campylobacter pylori) protein is Transcriptional regulatory protein CrdR.